Here is a 609-residue protein sequence, read N- to C-terminus: UvrABC system protein C (609 aa).

Positions 22–100 (EKPGVYQYLN…IKKYKPRYNV (79 aa)) constitute a GIY-YIG domain. In terms of domain architecture, UVR spans 214 to 249 (QDISRMLVEKMQELANEMKFEEAQKIKEKYLLIENY).

The protein belongs to the UvrC family. Interacts with UvrB in an incision complex.

It localises to the cytoplasm. Functionally, the UvrABC repair system catalyzes the recognition and processing of DNA lesions. UvrC both incises the 5' and 3' sides of the lesion. The N-terminal half is responsible for the 3' incision and the C-terminal half is responsible for the 5' incision. The chain is UvrABC system protein C from Bacteroides thetaiotaomicron (strain ATCC 29148 / DSM 2079 / JCM 5827 / CCUG 10774 / NCTC 10582 / VPI-5482 / E50).